Reading from the N-terminus, the 378-residue chain is Glutamate 5-kinase (378 aa).

Lys-14 contacts ATP. Ser-54, Asp-141, and Asn-153 together coordinate substrate. 173–174 (SD) serves as a coordination point for ATP. Residues 279–356 (AGRLTVDAGA…DEISAILGYD (78 aa)) form the PUA domain.

Belongs to the glutamate 5-kinase family.

The protein localises to the cytoplasm. It catalyses the reaction L-glutamate + ATP = L-glutamyl 5-phosphate + ADP. The protein operates within amino-acid biosynthesis; L-proline biosynthesis; L-glutamate 5-semialdehyde from L-glutamate: step 1/2. Functionally, catalyzes the transfer of a phosphate group to glutamate to form L-glutamate 5-phosphate. The polypeptide is Glutamate 5-kinase (Brucella abortus (strain S19)).